The primary structure comprises 403 residues: Alkaline protease 1 (403 aa).

A signal peptide spans 1–21 (MQSIKRTLLLLGALLPAALAA). Residues 22–125 (PAREPHPSSN…QIWYLDALTT (104 aa)) constitute a propeptide that is removed on maturation. Positions 36–120 (KYIITFKSGI…HVEEDQIWYL (85 aa)) constitute an Inhibitor I9 domain. Positions 130–403 (PWGLGSISHK…PNKLAYNGAA (274 aa)) constitute a Peptidase S8 domain. Catalysis depends on charge relay system residues Asp162 and His193. N-linked (GlcNAc...) asparagine glycans are attached at residues Asn253 and Asn307. Residue Ser349 is the Charge relay system of the active site.

The protein belongs to the peptidase S8 family.

The protein localises to the secreted. The enzyme catalyses Hydrolysis of proteins with broad specificity, and of Bz-Arg-OEt &gt; Ac-Tyr-OEt. Does not hydrolyze peptide amides.. Secreted alkaline protease that allows assimilation of proteinaceous substrates. The chain is Alkaline protease 1 (alp1) from Aspergillus clavatus (strain ATCC 1007 / CBS 513.65 / DSM 816 / NCTC 3887 / NRRL 1 / QM 1276 / 107).